A 206-amino-acid chain; its full sequence is Large ribosomal subunit protein uL4 (206 aa).

Positions 63–94 (MYKQKGTGRARHHSARAPQFRGGGKAHGPVVR) are disordered. Basic residues predominate over residues 64 to 77 (YKQKGTGRARHHSA).

The protein belongs to the universal ribosomal protein uL4 family. As to quaternary structure, part of the 50S ribosomal subunit.

In terms of biological role, one of the primary rRNA binding proteins, this protein initially binds near the 5'-end of the 23S rRNA. It is important during the early stages of 50S assembly. It makes multiple contacts with different domains of the 23S rRNA in the assembled 50S subunit and ribosome. Functionally, forms part of the polypeptide exit tunnel. The chain is Large ribosomal subunit protein uL4 from Mesorhizobium japonicum (strain LMG 29417 / CECT 9101 / MAFF 303099) (Mesorhizobium loti (strain MAFF 303099)).